We begin with the raw amino-acid sequence, 81 residues long: Acyl carrier protein (81 aa).

The region spanning 5 to 80 is the Carrier domain; sequence EEIFSKVKSI…DIVSYIEKKL (76 aa). Ser-40 carries the O-(pantetheine 4'-phosphoryl)serine modification.

The protein belongs to the acyl carrier protein (ACP) family. Post-translationally, 4'-phosphopantetheine is transferred from CoA to a specific serine of apo-ACP by AcpS. This modification is essential for activity because fatty acids are bound in thioester linkage to the sulfhydryl of the prosthetic group.

The protein localises to the cytoplasm. Its pathway is lipid metabolism; fatty acid biosynthesis. In terms of biological role, carrier of the growing fatty acid chain in fatty acid biosynthesis. This is Acyl carrier protein from Thermotoga maritima (strain ATCC 43589 / DSM 3109 / JCM 10099 / NBRC 100826 / MSB8).